The following is a 211-amino-acid chain: Thiamine-phosphate synthase (211 aa).

4-amino-2-methyl-5-(diphosphooxymethyl)pyrimidine-binding positions include 37–41 and N69; that span reads QLRIK. D70 and D89 together coordinate Mg(2+). 4-amino-2-methyl-5-(diphosphooxymethyl)pyrimidine is bound at residue S108. 134 to 136 lines the 2-[(2R,5Z)-2-carboxy-4-methylthiazol-5(2H)-ylidene]ethyl phosphate pocket; that stretch reads TQT. A 4-amino-2-methyl-5-(diphosphooxymethyl)pyrimidine-binding site is contributed by K137. 2-[(2R,5Z)-2-carboxy-4-methylthiazol-5(2H)-ylidene]ethyl phosphate-binding positions include G166 and 186 to 187; that span reads VS.

This sequence belongs to the thiamine-phosphate synthase family. The cofactor is Mg(2+).

It carries out the reaction 2-[(2R,5Z)-2-carboxy-4-methylthiazol-5(2H)-ylidene]ethyl phosphate + 4-amino-2-methyl-5-(diphosphooxymethyl)pyrimidine + 2 H(+) = thiamine phosphate + CO2 + diphosphate. The enzyme catalyses 2-(2-carboxy-4-methylthiazol-5-yl)ethyl phosphate + 4-amino-2-methyl-5-(diphosphooxymethyl)pyrimidine + 2 H(+) = thiamine phosphate + CO2 + diphosphate. The catalysed reaction is 4-methyl-5-(2-phosphooxyethyl)-thiazole + 4-amino-2-methyl-5-(diphosphooxymethyl)pyrimidine + H(+) = thiamine phosphate + diphosphate. The protein operates within cofactor biosynthesis; thiamine diphosphate biosynthesis; thiamine phosphate from 4-amino-2-methyl-5-diphosphomethylpyrimidine and 4-methyl-5-(2-phosphoethyl)-thiazole: step 1/1. Condenses 4-methyl-5-(beta-hydroxyethyl)thiazole monophosphate (THZ-P) and 2-methyl-4-amino-5-hydroxymethyl pyrimidine pyrophosphate (HMP-PP) to form thiamine monophosphate (TMP). The sequence is that of Thiamine-phosphate synthase from Klebsiella pneumoniae subsp. pneumoniae (strain ATCC 700721 / MGH 78578).